Consider the following 265-residue polypeptide: 14-3-3-like protein GF14 nu (265 aa).

Ser-67, Ser-109, and Ser-190 each carry phosphoserine. Position 211 is a phosphothreonine (Thr-211). The segment at 242 to 265 (AGGDEIKEASKHEPEEGKPAETGQ) is disordered. Positions 245 to 265 (DEIKEASKHEPEEGKPAETGQ) are enriched in basic and acidic residues.

The protein belongs to the 14-3-3 family. As to quaternary structure, component of the SERK1 signaling complex, composed of KAPP, CDC48A, GRF6 or GRF7, SERK1, SERK2, SERK3/BAK1 and BRI1. Interacts with DREB1A and DREB1B in the nucleus. Interacts with CINV1.

The protein localises to the nucleus. Its subcellular location is the cytoplasm. In terms of biological role, is associated with a DNA binding complex that binds to the G box, a well-characterized cis-acting DNA regulatory element found in plant genes. The protein is 14-3-3-like protein GF14 nu (GRF7) of Arabidopsis thaliana (Mouse-ear cress).